Consider the following 503-residue polypeptide: Aromatase (503 aa).

2 helical membrane-spanning segments follow: residues 19–39 (EAMP…LLVW) and 303–323 (MLIA…FLIA). The substrate site is built by Asp309 and Met374. Cys437 contacts heme.

Belongs to the cytochrome P450 family. Requires heme as cofactor. Phosphorylated in vitro by PKA and PKG/PRKG1. These phosphorylations inhibit the catalytic activity as measured by estrone synthesis from androstenedione (36% decrease for PKA and 30% for PKG/PRKG1). In terms of tissue distribution, widely expressed, including in adult and fetal brain, placenta, skin fibroblasts, adipose tissue and gonads.

Its subcellular location is the endoplasmic reticulum membrane. The protein localises to the microsome membrane. It carries out the reaction testosterone + 3 reduced [NADPH--hemoprotein reductase] + 3 O2 = 17beta-estradiol + formate + 3 oxidized [NADPH--hemoprotein reductase] + 4 H2O + 4 H(+). The enzyme catalyses androst-4-ene-3,17-dione + 3 reduced [NADPH--hemoprotein reductase] + 3 O2 = estrone + formate + 3 oxidized [NADPH--hemoprotein reductase] + 4 H2O + 4 H(+). The catalysed reaction is androst-4-ene-3,17-dione + reduced [NADPH--hemoprotein reductase] + O2 = 19-hydroxyandrost-4-ene-3,17-dione + oxidized [NADPH--hemoprotein reductase] + H2O + H(+). It catalyses the reaction 19-hydroxyandrost-4-ene-3,17-dione + reduced [NADPH--hemoprotein reductase] + O2 = 19-oxo-androst-4-ene-3,17-dione + oxidized [NADPH--hemoprotein reductase] + 2 H2O + H(+). It carries out the reaction 19-oxo-androst-4-ene-3,17-dione + reduced [NADPH--hemoprotein reductase] + O2 = estrone + formate + oxidized [NADPH--hemoprotein reductase] + H2O + 2 H(+). The enzyme catalyses estrone + reduced [NADPH--hemoprotein reductase] + O2 = 2-hydroxyestrone + oxidized [NADPH--hemoprotein reductase] + H2O + H(+). The catalysed reaction is 17beta-hydroxy-5alpha-androstan-3-one + reduced [NADPH--hemoprotein reductase] + O2 = 17beta,19-dihydroxy-3-oxo-5alpha-androstanone + oxidized [NADPH--hemoprotein reductase] + H2O + H(+). It catalyses the reaction 17beta,19-dihydroxy-3-oxo-5alpha-androstanone + reduced [NADPH--hemoprotein reductase] + O2 = 17beta-hydroxy-3,19-dioxo-5alpha-androstanone + oxidized [NADPH--hemoprotein reductase] + 2 H2O + H(+). It carries out the reaction 17beta-hydroxy-3,19-dioxo-5alpha-androstanone + reduced [NADPH--hemoprotein reductase] + O2 = 17beta-hydroxy-3-oxo-19-nor-5alpha-androst-1-ene + formate + oxidized [NADPH--hemoprotein reductase] + H2O + 2 H(+). It participates in steroid hormone biosynthesis. Functionally, a cytochrome P450 monooxygenase that catalyzes the conversion of C19 androgens, androst-4-ene-3,17-dione (androstenedione) and testosterone to the C18 estrogens, estrone and estradiol, respectively. Catalyzes three successive oxidations of C19 androgens: two conventional oxidations at C19 yielding 19-hydroxy and 19-oxo/19-aldehyde derivatives, followed by a third oxidative aromatization step that involves C1-beta hydrogen abstraction combined with cleavage of the C10-C19 bond to yield a phenolic A ring and formic acid. Alternatively, the third oxidative reaction yields a 19-norsteroid and formic acid. Converts dihydrotestosterone to delta1,10-dehydro 19-nordihydrotestosterone and may play a role in homeostasis of this potent androgen. Also displays 2-hydroxylase activity toward estrone. Mechanistically, uses molecular oxygen inserting one oxygen atom into a substrate, and reducing the second into a water molecule, with two electrons provided by NADPH via cytochrome P450 reductase (CPR; NADPH-ferrihemoprotein reductase). The chain is Aromatase from Homo sapiens (Human).